The sequence spans 373 residues: Probable neutral protease 2 homolog MCYG_05201 (373 aa).

A signal peptide spans 1–19 (MQFFTALAAVGALVAPALA). A propeptide spanning residues 20–187 (LPTQVPANQS…AHIVGTIDKR (168 aa)) is cleaved from the precursor. Intrachain disulfides connect Cys195/Cys265 and Cys272/Cys290. Residue His314 participates in Zn(2+) binding. The active site involves Glu315. Positions 318 and 329 each coordinate Zn(2+).

The protein belongs to the peptidase M35 family. The cofactor is Zn(2+).

It is found in the secreted. The catalysed reaction is Preferential cleavage of bonds with hydrophobic residues in P1'. Also 3-Asn-|-Gln-4 and 8-Gly-|-Ser-9 bonds in insulin B chain.. Functionally, probable secreted metalloprotease that shows high activities on basic nuclear substrates such as histone and protamine. May be involved in virulence. The chain is Probable neutral protease 2 homolog MCYG_05201 from Arthroderma otae (strain ATCC MYA-4605 / CBS 113480) (Microsporum canis).